The primary structure comprises 343 residues: L-threonine 3-dehydrogenase (343 aa).

Cysteine 39 lines the Zn(2+) pocket. Residues threonine 41 and histidine 44 each act as charge relay system in the active site. 6 residues coordinate Zn(2+): histidine 64, glutamate 65, cysteine 94, cysteine 97, cysteine 100, and cysteine 108. NAD(+) contacts are provided by residues isoleucine 176, aspartate 196, arginine 201, 263–265 (LGI), and 287–288 (IY).

Belongs to the zinc-containing alcohol dehydrogenase family. Homotetramer. Zn(2+) is required as a cofactor.

It is found in the cytoplasm. It carries out the reaction L-threonine + NAD(+) = (2S)-2-amino-3-oxobutanoate + NADH + H(+). The protein operates within amino-acid degradation; L-threonine degradation via oxydo-reductase pathway; glycine from L-threonine: step 1/2. Its function is as follows. Catalyzes the NAD(+)-dependent oxidation of L-threonine to 2-amino-3-ketobutyrate. The sequence is that of L-threonine 3-dehydrogenase from Anaeromyxobacter sp. (strain Fw109-5).